A 61-amino-acid polypeptide reads, in one-letter code: uncharacterized protein (61 aa).

The disordered stretch occupies residues 23–61; the sequence is VPTKWQDYKKPGPNQKYTSDGKKRRRIRRSQKSILGVRS. The span at 44-53 shows a compositional bias: basic residues; that stretch reads KKRRRIRRSQ.

This is an uncharacterized protein from Archaeoglobus fulgidus (strain ATCC 49558 / DSM 4304 / JCM 9628 / NBRC 100126 / VC-16).